A 572-amino-acid polypeptide reads, in one-letter code: Sulfite reductase [NADPH] hemoprotein beta-component (572 aa).

Residues Cys-437, Cys-443, Cys-482, and Cys-486 each coordinate [4Fe-4S] cluster. Cys-486 serves as a coordination point for siroheme.

This sequence belongs to the nitrite and sulfite reductase 4Fe-4S domain family. In terms of assembly, alpha(8)-beta(8). The alpha component is a flavoprotein, the beta component is a hemoprotein. Siroheme serves as cofactor. Requires [4Fe-4S] cluster as cofactor.

The catalysed reaction is hydrogen sulfide + 3 NADP(+) + 3 H2O = sulfite + 3 NADPH + 4 H(+). It participates in sulfur metabolism; hydrogen sulfide biosynthesis; hydrogen sulfide from sulfite (NADPH route): step 1/1. Functionally, component of the sulfite reductase complex that catalyzes the 6-electron reduction of sulfite to sulfide. This is one of several activities required for the biosynthesis of L-cysteine from sulfate. The polypeptide is Sulfite reductase [NADPH] hemoprotein beta-component (Staphylococcus epidermidis (strain ATCC 35984 / DSM 28319 / BCRC 17069 / CCUG 31568 / BM 3577 / RP62A)).